Consider the following 412-residue polypeptide: Isovaleryl-CoA dehydrogenase, mitochondrial (412 aa).

Residues 1–25 constitute a mitochondrion transit peptide; that stretch reads MHKLFVARSVKSALFRIKNHQKPQF. Residues 154-163 and 187-189 contribute to the FAD site; these read LAMSEPNAGS and WCT. S163 is a substrate binding site. Substrate is bound by residues 209–210, Y264, and 271–274; these read SK and DLER. The active-site Proton acceptor is E273. Residues R299, Q310, and 367–371 contribute to the FAD site; that span reads QCLGG. 394–395 serves as a coordination point for substrate; the sequence is AG. Residue 396-398 participates in FAD binding; it reads TSE.

Belongs to the acyl-CoA dehydrogenase family. As to quaternary structure, homotetramer. The cofactor is FAD. In terms of tissue distribution, expressed in flowers and tubers.

The protein resides in the mitochondrion. It carries out the reaction 3-methylbutanoyl-CoA + oxidized [electron-transfer flavoprotein] + H(+) = 3-methylbut-2-enoyl-CoA + reduced [electron-transfer flavoprotein]. It participates in amino-acid degradation; L-leucine degradation; (S)-3-hydroxy-3-methylglutaryl-CoA from 3-isovaleryl-CoA: step 1/3. In terms of biological role, involved in the catabolism of amino acids. Uses isovaleryl-CoA as substrate. Minor activity detected with 2-methylpalmitoyl-CoA or 2-methylbutanoyl-CoA, but no activity with short- and medium-straight chain acyl-CoA esters or with 2-methylhexanoyl-CoA. This is Isovaleryl-CoA dehydrogenase, mitochondrial (IVD) from Solanum tuberosum (Potato).